The sequence spans 292 residues: Expansin-B11 (292 aa).

The first 27 residues, 1 to 27 (MAKSCTLVLLLVALVGLSLLVSPIACS), serve as a signal peptide directing secretion. An N-linked (GlcNAc...) asparagine glycan is attached at Asn-51. Positions 82-192 (GGACGYQTAV…RRVPCKYSGV (111 aa)) constitute an Expansin-like EG45 domain. Disulfide bonds link Cys-85/Cys-114, Cys-117/Cys-187, and Cys-122/Cys-128. The 83-residue stretch at 205 to 287 (FYFEVLIEFE…SWKPGVTYRS (83 aa)) folds into the Expansin-like CBD domain.

This sequence belongs to the expansin family. Expansin B subfamily. Expressed in internodes.

It localises to the secreted. The protein localises to the cell wall. Its subcellular location is the membrane. Functionally, may cause loosening and extension of plant cell walls by disrupting non-covalent bonding between cellulose microfibrils and matrix glucans. No enzymatic activity has been found. May be required for rapid internodal elongation in deepwater rice during submergence. This is Expansin-B11 (EXPB11) from Oryza sativa subsp. japonica (Rice).